The following is a 226-amino-acid chain: UPF0758 protein M6_Spy0838 (226 aa).

An MPN domain is found at 103–225; the sequence is SVLTSVQVAE…YYSFREKSTL (123 aa). The Zn(2+) site is built by His174, His176, and Asp187. A JAMM motif motif is present at residues 174–187; that stretch reads HNHPSGNIEPSSND.

This sequence belongs to the UPF0758 family.

This chain is UPF0758 protein M6_Spy0838, found in Streptococcus pyogenes serotype M6 (strain ATCC BAA-946 / MGAS10394).